Here is a 190-residue protein sequence, read N- to C-terminus: Imidazoleglycerol-phosphate dehydratase (190 aa).

The protein belongs to the imidazoleglycerol-phosphate dehydratase family.

It is found in the cytoplasm. The catalysed reaction is D-erythro-1-(imidazol-4-yl)glycerol 3-phosphate = 3-(imidazol-4-yl)-2-oxopropyl phosphate + H2O. It functions in the pathway amino-acid biosynthesis; L-histidine biosynthesis; L-histidine from 5-phospho-alpha-D-ribose 1-diphosphate: step 6/9. This Methanococcus maripaludis (strain C7 / ATCC BAA-1331) protein is Imidazoleglycerol-phosphate dehydratase.